The primary structure comprises 223 residues: Noggin (223 aa).

The N-terminal stretch at 1–26 (MDPPRLRVATYLLLLSVGLLLHGGAC) is a signal peptide. The N-linked (GlcNAc...) asparagine glycan is linked to Asn-61. Disulfide bonds link Cys-143/Cys-180, Cys-166/Cys-217, Cys-172/Cys-219, and Cys-195/Cys-204.

This sequence belongs to the noggin family. As to quaternary structure, homodimer.

It localises to the secreted. Inhibitor of bone morphogenetic proteins (BMP) signaling. This is Noggin (nog) from Takifugu rubripes (Japanese pufferfish).